The primary structure comprises 181 residues: Acetylcholinesterase (181 aa).

The active-site Acyl-ester intermediate is S76. E132 serves as the catalytic Charge relay system. Residues 162–181 are disordered; it reads WQDQDNGGLPLTGNPTXPHN.

The protein belongs to the type-B carboxylesterase/lipase family. The N-terminus is blocked. In terms of tissue distribution, expressed by the venom gland. Is also probably expressed by liver and muscle.

The protein localises to the synapse. It localises to the secreted. Its subcellular location is the cell membrane. It carries out the reaction acetylcholine + H2O = choline + acetate + H(+). Functionally, in venom, its toxic role is unclear: it could result in less musculatory control by rapidly hydrolyzing acetylcholine, or that it works synergistically with alkaline phosphatase (ALP) in paralyzing prey through hypotension. In muscle, it terminates signal transduction at the neuromuscular junction by rapid hydrolysis of the acetylcholine released into the synaptic cleft. In liver, its function is unclear: it could serve as a safeguard against any diffusion of acetylcholine from synapses into the circulation. The protein is Acetylcholinesterase (ACHE) of Naja oxiana (Central Asian cobra).